We begin with the raw amino-acid sequence, 143 residues long: Type II secretion system core protein G (143 aa).

Residues 1 to 8 (MQKRRQSG) constitute a propeptide, leader sequence. Phe9 carries the N-methylphenylalanine modification. Residues 9–29 (FTLLEVMVVIVILGILASLVV) traverse the membrane as a helical segment. The segment at 70–92 (QGLDALVNKPTAAPEPRSYRDGG) is disordered.

It belongs to the GSP G family. As to quaternary structure, type II secretion system is composed of four main components: the outer membrane complex, the inner membrane complex, the cytoplasmic secretion ATPase and the periplasm-spanning pseudopilus. Forms homomultimers. Cleaved by the prepilin peptidase. Post-translationally, methylated by prepilin peptidase at the amino group of the N-terminal phenylalanine once the leader sequence is cleaved.

Its subcellular location is the cell inner membrane. Its function is as follows. Core component of the type II secretion system required for the energy-dependent secretion of extracellular factors such as proteases and toxins from the periplasm. Pseudopilin (pilin-like) protein that polymerizes to form the pseudopilus. Further polymerization triggers pseudopilus growth. This chain is Type II secretion system core protein G (exeG), found in Aeromonas hydrophila.